We begin with the raw amino-acid sequence, 204 residues long: CASP-like protein 1U3 (204 aa).

At 1 to 19 the chain is on the cytoplasmic side; it reads MCEGEKKKDSSSGALYCVN. The helical transmembrane segment at 20 to 40 threads the bilayer; it reads LALRIVVLGLAVAAAALMATA. At 41-63 the chain is on the extracellular side; it reads SQCTIFLYYGGPLHTITYKDFGP. Residues 64-84 form a helical membrane-spanning segment; it reads FVYLVVASSIGAFMEAIAIFL. At 85-97 the chain is on the cytoplasmic side; it reads TICKKKDGTPAKV. The helical transmembrane segment at 98–118 threads the bilayer; the sequence is LLPLLDAAVPVLLYSATAAAF. The Extracellular portion of the chain corresponds to 119 to 146; the sequence is AAGDMSYCAVGKRVGVCTTAAAGNFCNQ. The helical transmembrane segment at 147–167 threads the bilayer; that stretch reads VHIAMYVSLAAGVALLVAEIV. The Cytoplasmic segment spans residues 168–204; the sequence is KHWPDSGKKKEGGGGGCGSDSDSDKSTPCHHGCHSKH. The tract at residues 173-204 is disordered; that stretch reads SGKKKEGGGGGCGSDSDSDKSTPCHHGCHSKH.

It belongs to the Casparian strip membrane proteins (CASP) family. As to quaternary structure, homodimer and heterodimers.

It localises to the cell membrane. The chain is CASP-like protein 1U3 from Oryza sativa subsp. japonica (Rice).